Consider the following 589-residue polypeptide: ATP-dependent ubiquitin transferase-like protein Cap2 (589 aa).

A Glycyl cysteine dithioester (Cys-Gly) (interchain with G-Cter in DncV) cross-link involves residue Cys13. Lys77 participates in a covalent cross-link: Glycyl lysine isopeptide (Lys-Gly) (interchain with G-Cter in DncV). The For E2-like domain role is filled by Cys91. Glycyl lysine isopeptide (Lys-Gly) (interchain with G-Cter in DncV) cross-links involve residues Lys305, Lys387, and Lys484. Residue Cys493 forms a Glycyl cysteine dithioester (Cys-Gly) (interchain with G-Cter in DncV) linkage. Residues Cys493, Cys496, and Cys513 each act as for E1-like domain in the active site. Cys513 is covalently cross-linked (Glycyl cysteine dithioester (Cys-Gly) (interchain with G-Cter in DncV)). Residue Lys523 forms a Glycyl lysine isopeptide (Lys-Gly) (interchain with G-Cter in DncV) linkage.

The protein in the C-terminal section; belongs to the HesA/MoeB/ThiF family. As to quaternary structure, a Cap2 dimer is bound on either side by a DncV monomer. Post-translationally, conjugated to DncV via 5 different Lys residues and 3 Cys residues.

CD-NTase priming component of a CBASS antiviral system. CBASS (cyclic oligonucleotide-based antiphage signaling system) provides immunity against bacteriophages. The CD-NTase protein (DncV) synthesizes cyclic nucleotides in response to infection; these serve as specific second messenger signals. The signals activate a diverse range of effectors, leading to bacterial cell death and thus abortive phage infection. A type II-A(GA) CBASS system. Functionally, conjugates DncV to itself in vitro and to other cellular proteins in vivo; conjugation requires ATP. This primes DncV, upon phage infection CdnA activates and makes cyclic nucleotides. Its function is as follows. Protects E.coli against phage infection. When capV and dncV are introduced in E.coli MG1655 there is 1000-fold protection against phage P1; protection against other phage (T2, T4, T5, T6 and lambda-vir) requires the 2 subsequent genes. In another paper the capV-dncV-cap2-cap3 operon gives 10(4)-10(5)-fold protection against phages lambda, T2, T4 and T6, about 1000-fold protection against P1 and 10-fold protection against T5. The protein is ATP-dependent ubiquitin transferase-like protein Cap2 of Escherichia coli (strain TW11681).